Reading from the N-terminus, the 377-residue chain is Pseudouridylate synthase RPUSD4, mitochondrial (377 aa).

Residues 1–35 (MAAPLLGSPGLQVLSMSSRTGKLFTPSSRSFCSRA) constitute a mitochondrion transit peptide. The active site involves aspartate 153.

The protein belongs to the pseudouridine synthase RluA family. As to quaternary structure, interacts with 16S mt-rRNA, mt-tRNA(Phe) and mt-tRNA(Met). Forms a regulatory protein-RNA complex, consisting of RCC1L, NGRN, RPUSD3, RPUSD4, TRUB2, FASTKD2 and 16S mt-rRNA.

The protein resides in the mitochondrion matrix. It is found in the nucleus. Its subcellular location is the cytoplasm. It carries out the reaction uridine in 5S rRNA = pseudouridine in 5S rRNA. The enzyme catalyses a uridine in tRNA = a pseudouridine in tRNA. It catalyses the reaction a uridine in mRNA = a pseudouridine in mRNA. Catalyzes uridine to pseudouridine isomerization (pseudouridylation) of different mitochondrial RNA substrates. Acts on position 1397 in 16S mitochondrial ribosomal RNA (16S mt-rRNA). This modification is required for the assembly of 16S mt-rRNA into a functional mitochondrial ribosome. As a component of a functional protein-RNA module, consisting of RCC1L, NGRN, RPUSD3, RPUSD4, TRUB2, FASTKD2 and 16S mt-rRNA, controls 16S mt-rRNA abundance and is required for intra-mitochondrial translation. Acts on position 39 in mitochondrial tRNA(Phe). Also catalyzes pseudouridylation of mRNAs in nucleus: acts as a regulator of pre-mRNA splicing by mediating pseudouridylation of pre-mRNAs at locations associated with alternatively spliced regions. Pseudouridylation of pre-mRNAs near splice sites directly regulates mRNA splicing and mRNA 3'-end processing. This is Pseudouridylate synthase RPUSD4, mitochondrial from Rattus norvegicus (Rat).